We begin with the raw amino-acid sequence, 324 residues long: Polyketide biosynthesis acyltransferase homolog BaeD (324 aa).

Ser-99 is an active-site residue.

The protein localises to the cytoplasm. Its pathway is antibiotic biosynthesis; bacillaene biosynthesis. Functionally, probably involved in some intermediate steps for the synthesis of the antibiotic polyketide bacillaene which is involved in secondary metabolism. The chain is Polyketide biosynthesis acyltransferase homolog BaeD (baeD) from Bacillus velezensis (strain DSM 23117 / BGSC 10A6 / LMG 26770 / FZB42) (Bacillus amyloliquefaciens subsp. plantarum).